The sequence spans 216 residues: MKLKYVKALVAVTVALGVLLPSTISHAKSFSGRSSSSYSSRSSSSSYSGSYKSSPKSSYSSGSSSSSKKSKTSDDSSSSISLKKKPSEKASSSSSKKSSGTFSGATSKVTGKTYSGKTSKAYVGGRYVSVNHYYHAGFAPSGWFGYYSGFTMGMFMISMMHPWGYTYHPVGGPGYVSYGASPIAWIVDIIALIIILIIVIALIRAFKAPKTYRRRF.

A helical membrane pass occupies residues 5 to 25; it reads YVKALVAVTVALGVLLPSTIS. Low complexity-rich tracts occupy residues 28-67 and 89-108; these read KSFS…SSSS and KASS…ATSK. A disordered region spans residues 28–115; sequence KSFSGRSSSS…TSKVTGKTYS (88 aa). The next 2 membrane-spanning stretches (helical) occupy residues 137 to 157 and 183 to 203; these read GFAP…MFMI and IAWI…IALI.

It localises to the cell membrane. This is an uncharacterized protein from Bacillus subtilis (strain 168).